The sequence spans 364 residues: DNA polymerase IV (364 aa).

The 185-residue stretch at 14 to 198 (IIHIDMDAFF…LPIEKFHGVG (185 aa)) folds into the UmuC domain. 2 residues coordinate Mg(2+): Asp18 and Asp116. Glu117 is a catalytic residue.

It belongs to the DNA polymerase type-Y family. In terms of assembly, monomer. Mg(2+) is required as a cofactor.

It is found in the cytoplasm. It carries out the reaction DNA(n) + a 2'-deoxyribonucleoside 5'-triphosphate = DNA(n+1) + diphosphate. Poorly processive, error-prone DNA polymerase involved in untargeted mutagenesis. Copies undamaged DNA at stalled replication forks, which arise in vivo from mismatched or misaligned primer ends. These misaligned primers can be extended by PolIV. Exhibits no 3'-5' exonuclease (proofreading) activity. May be involved in translesional synthesis, in conjunction with the beta clamp from PolIII. The polypeptide is DNA polymerase IV (Streptococcus pyogenes serotype M2 (strain MGAS10270)).